Here is a 146-residue protein sequence, read N- to C-terminus: Flavodoxin (146 aa).

The Flavodoxin-like domain maps to 4–143 (SLIVYGSTTG…EIVSWGSGIA (140 aa)).

This sequence belongs to the flavodoxin family. Requires FMN as cofactor.

Functionally, low-potential electron donor to a number of redox enzymes. This chain is Flavodoxin, found in Maridesulfovibrio salexigens (strain ATCC 14822 / DSM 2638 / NCIMB 8403 / VKM B-1763) (Desulfovibrio salexigens).